Consider the following 374-residue polypeptide: Ribosomal RNA large subunit methyltransferase G (374 aa).

Belongs to the methyltransferase superfamily. RlmG family.

It is found in the cytoplasm. The enzyme catalyses guanosine(1835) in 23S rRNA + S-adenosyl-L-methionine = N(2)-methylguanosine(1835) in 23S rRNA + S-adenosyl-L-homocysteine + H(+). Specifically methylates the guanine in position 1835 (m2G1835) of 23S rRNA. This chain is Ribosomal RNA large subunit methyltransferase G, found in Pseudomonas putida (strain GB-1).